The primary structure comprises 761 residues: Protein transport protein SEC23 C (761 aa).

Zn(2+) is bound by residues cysteine 60, cysteine 63, cysteine 82, and cysteine 85. The interval 60 to 85 (CRTCRSVLNPYSVVDFSACNWGCPFC) is zinc finger-like.

It belongs to the SEC23/SEC24 family. SEC24 subfamily. Component of the coat protein complex II (COPII), composed of at least five proteins: the Sec23/24 complex, the Sec13/31 complex and Sar1.

The protein resides in the cytoplasmic vesicle. It localises to the COPII-coated vesicle membrane. Its subcellular location is the endoplasmic reticulum membrane. The protein localises to the membrane. Its function is as follows. Component of the coat protein complex II (COPII) which promotes the formation of transport vesicles from the endoplasmic reticulum (ER). The coat has two main functions, the physical deformation of the endoplasmic reticulum membrane into vesicles and the selection of cargo molecules. This chain is Protein transport protein SEC23 C, found in Arabidopsis thaliana (Mouse-ear cress).